Reading from the N-terminus, the 48-residue chain is Fimbrial assembly protein, serogroup E2 (48 aa).

This Dichelobacter nodosus (Bacteroides nodosus) protein is Fimbrial assembly protein, serogroup E2 (fimB).